Consider the following 215-residue polypeptide: CASP-like protein 1E1 (215 aa).

At 1-51 (MESSRGKPGLNGSGGGAAAFDYSSRRGYYTGAGAALPPLAAGSRAPPVDPC) the chain is on the cytoplasmic side. Residues 52–72 (CVVLRVFVLLGTLASAVVMAA) form a helical membrane-spanning segment. Topologically, residues 73 to 103 (DRQSTTVQIAAGEELAPPLRVPVTAKWTYSS) are extracellular. Residues 104-124 (AFVYFVVANAMVFAFSAAALA) traverse the membrane as a helical segment. Topologically, residues 125–130 (AVRRRS) are cytoplasmic. Residues 131 to 151 (AVVPVMVGDLVAMALLFSAVG) form a helical membrane-spanning segment. Residues 152–185 (AAAQFGLLGERGNAHVRWAKVCDVYGPFCERAMA) are Extracellular-facing. A helical membrane pass occupies residues 186–206 (AVVVALIAAFADLVLLMLTIL). Over 207–215 (TIHKASSYY) the chain is Cytoplasmic.

This sequence belongs to the Casparian strip membrane proteins (CASP) family. As to quaternary structure, homodimer and heterodimers.

Its subcellular location is the cell membrane. This Oryza sativa subsp. japonica (Rice) protein is CASP-like protein 1E1.